We begin with the raw amino-acid sequence, 1065 residues long: Alpha-L-arabinofuranosidase (1065 aa).

Positions 1-26 are cleaved as a signal peptide; the sequence is MKHWKKMAASLIAISTMVAVVPTTYA. The BIG2 domain occupies 277–346; the sequence is VVNNKLTLIE…TTELGGVKAE (70 aa). The interval 997-1031 is disordered; that stretch reads KAPTNPGEGDGDKGDGNKPTTPTTGDKTNVNKPGS. Over residues 1014-1031 the composition is skewed to polar residues; the sequence is KPTTPTTGDKTNVNKPGS. A helical transmembrane segment spans residues 1040–1060; it reads VLGLGGAVVALAIAGISLTLW.

This sequence belongs to the glycosyl hydrolase 43 family.

Its subcellular location is the cell membrane. The enzyme catalyses Hydrolysis of terminal non-reducing alpha-L-arabinofuranoside residues in alpha-L-arabinosides.. In terms of biological role, involved in the type II arabinogalactan (AG) side chains degradation. Releases arabinofuranose (Araf) from alpha-1,3-Araf-substituted beta-1,6-galactooligosaccharides. Can use radish root AGP, larch AG and arabinan. Shows weaker activity with gum arabic and arabinoxylan. The chain is Alpha-L-arabinofuranosidase from Bifidobacterium longum subsp. longum (strain ATCC 15707 / DSM 20219 / JCM 1217 / NCTC 11818 / E194b).